The primary structure comprises 151 residues: D-aminoacyl-tRNA deacylase (151 aa).

Positions 136–137 (GP) match the Gly-cisPro motif, important for rejection of L-amino acids motif.

The protein belongs to the DTD family. Homodimer.

It localises to the cytoplasm. It carries out the reaction glycyl-tRNA(Ala) + H2O = tRNA(Ala) + glycine + H(+). The catalysed reaction is a D-aminoacyl-tRNA + H2O = a tRNA + a D-alpha-amino acid + H(+). An aminoacyl-tRNA editing enzyme that deacylates mischarged D-aminoacyl-tRNAs. Also deacylates mischarged glycyl-tRNA(Ala), protecting cells against glycine mischarging by AlaRS. Acts via tRNA-based rather than protein-based catalysis; rejects L-amino acids rather than detecting D-amino acids in the active site. By recycling D-aminoacyl-tRNA to D-amino acids and free tRNA molecules, this enzyme counteracts the toxicity associated with the formation of D-aminoacyl-tRNA entities in vivo and helps enforce protein L-homochirality. The sequence is that of D-aminoacyl-tRNA deacylase from Lactococcus lactis subsp. cremoris (strain MG1363).